We begin with the raw amino-acid sequence, 343 residues long: Coiled-coil domain-containing protein 97 (343 aa).

Methionine 1 is subject to N-acetylmethionine. Residues 1–37 (MEAVATATAAKEPDKGCIEPGPGHWGELSRTPVPSKP) are disordered. A Phosphothreonine modification is found at threonine 47. 3 disordered regions span residues 200-220 (ARTP…ACPL), 234-277 (QQRL…DSEE), and 292-343 (RFLD…LDGD). Residues 224–262 (LLQSYEERELQQRLLQQQEEEEACLEEEEEEEDSDEEDQ) adopt a coiled-coil conformation. Residues 241–261 (QEEEEACLEEEEEEEDSDEED) show a composition bias toward acidic residues. Basic and acidic residues predominate over residues 262–277 (QRSGKDSEAWVPDSEE). Phosphoserine occurs at positions 275 and 337. The span at 324-343 (ERYFDEEEPEDAPSPELDGD) shows a compositional bias: acidic residues.

Associates with splicing factor SF3B complex, involved in branch-site recognition.

It is found in the nucleus. May play a role pre-mRNA splicing through the association with the splicing factor SF3B complex which is involved in branch-site recognition. This is Coiled-coil domain-containing protein 97 (CCDC97) from Homo sapiens (Human).